The primary structure comprises 359 residues: Mitochondrial glutathione transporter SLC25A39 (359 aa).

Over 1–14 (MADQDPAGISPLQQ) the chain is Mitochondrial intermembrane. 3 Solcar repeats span residues 9-151 (ISPL…LKAF), 159-243 (SDLY…VKSW), and 253-347 (TSVG…GKSF). The chain crosses the membrane as a helical span at residues 15-35 (MVASGTGAVVTSLFMTPLDVV). The Mitochondrial matrix portion of the chain corresponds to 36–121 (KVRLQSQRPS…VKIVRHEGTR (86 aa)). Positions 74, 78, 88, and 94 each coordinate [2Fe-2S] cluster. The chain crosses the membrane as a helical span at residues 122-142 (TLWSGLPATLVMTVPATAIYF). Over 143 to 160 (TAYDQLKAFLCGRALTSD) the chain is Mitochondrial intermembrane. A helical transmembrane segment spans residues 161–181 (LYAPMVAGALARLGTVTVISP). The Mitochondrial matrix segment spans residues 182–214 (LELMRTKLQAQHVSYRELGACVRTAVAQGGWRS). The helical transmembrane segment at 215-235 (LWLGWGPTALRDVPFSALYWF) threads the bilayer. The Mitochondrial intermembrane portion of the chain corresponds to 236 to 258 (NYELVKSWLNGFRPKDQTSVGMS). Residues 259-279 (FVAGGISGTVAAVLTLPFDVV) form a helical membrane-spanning segment. At 280-317 (KTQRQVALGAMEAVRVNPLHVDSTWLLLRRIRAESGTK) the chain is on the mitochondrial matrix side. Residues 318–338 (GLFAGFLPRIIKAAPSCAIMI) form a helical membrane-spanning segment. Residues 339–359 (STYEFGKSFFQRLNQDRLLGG) are Mitochondrial intermembrane-facing.

This sequence belongs to the mitochondrial carrier (TC 2.A.29) family. Post-translationally, cleaved and degraded by AFG3L2; degradation by AFG3L2 is regulated by the ability of SLC25A39 to bind iron-sulfur. In absence of mitochondrial glutathione, SLC25A39 binds iron-sulfur, preventing cleavage and degradation by AFG3L2. The presence of mitochondrial glutathione prevents iron-sulfur-binding to SLC25A39, promoting cleavage and degradation by AFG3L2. In terms of tissue distribution, expressed in many tissues. Abundant in testis and kidney.

It is found in the mitochondrion inner membrane. It carries out the reaction glutathione(in) = glutathione(out). Its activity is regulated as follows. The activity of SLC25A39 is regulated by levels of mitochondrial glutathione via its ability to bind [2Fe-2S] iron-sulfur cluster. Upon physiological levels of mitochondrial glutathione, glutathione prevents iron-sulfur-binding to SLC25A39 promoting cleavage and degradation by AFG3L2. Upon depletion of mitochondrial glutathione, SLC25A39 binds iron-sulfur, preventing cleavage and degradation by AFG3L2. Mitochondrial transporter required for glutathione import into mitochondria. Glutathione, which plays key roles in oxidative metabolism, is produced exclusively in the cytosol and is imported in many organelles. Mitochondrial glutathione is required for the activity and stability of proteins containing iron-sulfur clusters, as well as erythropoiesis. The chain is Mitochondrial glutathione transporter SLC25A39 from Homo sapiens (Human).